The following is a 517-amino-acid chain: Ribonuclease Y (517 aa).

A helical membrane pass occupies residues 1-21; sequence MIEVLIGLGAGVVGVGAGYLY. The KH domain maps to 207–273; the sequence is LINVVNIKND…TRVIELLVED (67 aa). The 94-residue stretch at 333-426 folds into the HD domain; it reads ALAHSLEVAH…VCAADALSAA (94 aa).

Belongs to the RNase Y family.

Its subcellular location is the cell membrane. Functionally, endoribonuclease that initiates mRNA decay. The chain is Ribonuclease Y from Campylobacter concisus (strain 13826).